The sequence spans 290 residues: UPF0761 membrane protein YihY (290 aa).

6 helical membrane passes run 44-64, 104-124, 140-160, 183-203, 210-230, and 244-264; these read LLSLVPLVAVVFALFAAFPMF, VGACGLIVTALLLMYSIDSAL, FAVYWMILTLGPLLAGASLAI, IFPLLLSWISFWLLYSIVPTI, AIVGAFVAALLFEAGKKGFAL, and VLAVIPILFVWVYWTWCIVLL.

This sequence belongs to the UPF0761 family.

The protein localises to the cell inner membrane. This Shigella boydii serotype 4 (strain Sb227) protein is UPF0761 membrane protein YihY.